The primary structure comprises 553 residues: Neutral amino acid transporter B(0) (553 aa).

M1 carries the post-translational modification N-acetylmethionine. Residues 1-50 lie on the Cytoplasmic side of the membrane; sequence MAVDPPKADPKGVAVDSSRRCPALGSREDQSAKAGGCCGSRDRVRRCIRA. The chain crosses the membrane as a helical span at residues 51–80; that stretch reads NLLVLLTVAAVVAGVGLGLGVSAAGGADAL. Residues 81-93 lie on the Extracellular side of the membrane; it reads GPARLTRFAFPGE. Residues 94–115 form a helical membrane-spanning segment; sequence LLLRLLKMIILPLVVCSLIGGA. The Cytoplasmic segment spans residues 116 to 129; sequence ASLDPSALGRVGAW. A helical transmembrane segment spans residues 130-152; the sequence is ALLFFLVTTLLASALGVGLALAL. Topologically, residues 153 to 236 are extracellular; the sequence is KPGAAVTAIT…INSTMVQLLC (84 aa). N-linked (GlcNAc...) asparagine glycosylation is found at N165 and N228. A helical membrane pass occupies residues 237–260; sequence EVEGMNILGLVVFAIVFGVALRKL. The Cytoplasmic portion of the chain corresponds to 261–269; the sequence is GPEGELLIR. Residues 270 to 297 traverse the membrane as a helical segment; that stretch reads FFNSFNDATMVLVSWIMWYAPVGILFLV. Topologically, residues 298–318 are extracellular; sequence ASKIVEMKDVRQLFISLGKYI. A helical transmembrane segment spans residues 319-340; sequence LCCLLGHAIHGLLVLPLIYFLF. The Cytoplasmic portion of the chain corresponds to 341-345; it reads TRKNP. Positions 346–376 form an intramembrane region, discontinuously helical; the sequence is YRFLWGIMTPLATAFGTSSSSATLPLMMKCV. The Cytoplasmic portion of the chain corresponds to 377-385; sequence EEKNGVAKH. Residues 386-412 traverse the membrane as a helical segment; that stretch reads ISRFILPIGATVNMDGAALFQCVAAVF. The Na(+) site is built by G394, T396, and N398. Residues 413 to 425 are Extracellular-facing; the sequence is IAQLNGVSLDFVK. An intramembrane region (discontinuously helical) is located at residues 426–459; that stretch reads IITILVTATASSVGAAGIPAGGVLTLAIILEAVS. Over 460–472 the chain is Extracellular; sequence LPVKDISLILAVD. A helical membrane pass occupies residues 473–494; sequence WLVDRSCTVLNVEGDAFGAGLL. 2 residues coordinate Na(+): N483 and D487. Residues 495–553 lie on the Cytoplasmic side of the membrane; sequence QSYVDRTKMPSSEPELIQVKNEVSLNPLPLATEEGNPLLKQYQGPTGDSSATFEKESVM. Phosphoserine is present on residues S505, S506, S518, S543, and S551. Residues 531–553 form a disordered region; that stretch reads PLLKQYQGPTGDSSATFEKESVM. Over residues 537 to 546 the composition is skewed to polar residues; the sequence is QGPTGDSSAT.

The protein belongs to the dicarboxylate/amino acid:cation symporter (DAACS) (TC 2.A.23) family. SLC1A5 subfamily. As to quaternary structure, homotrimer. Highly expressed in adipose tissue. Detected in lung, skeletal muscle, large intestine, kidney and testis. Expressed in lung, brain, kidney and neural retina (at protein level). Expressed in Mueller cells (at protein level).

It is found in the cell membrane. Its subcellular location is the melanosome. The enzyme catalyses L-glutamine(out) + L-serine(in) + Na(+)(out) = L-glutamine(in) + L-serine(out) + Na(+)(in). It carries out the reaction L-glutamine(in) + L-serine(out) + Na(+)(out) = L-glutamine(out) + L-serine(in) + Na(+)(in). It catalyses the reaction L-threonine(in) + L-glutamine(out) + Na(+)(out) = L-threonine(out) + L-glutamine(in) + Na(+)(in). The catalysed reaction is L-threonine(out) + L-glutamine(in) + Na(+)(out) = L-threonine(in) + L-glutamine(out) + Na(+)(in). The enzyme catalyses L-asparagine(in) + L-glutamine(out) + Na(+)(out) = L-asparagine(out) + L-glutamine(in) + Na(+)(in). It carries out the reaction L-asparagine(out) + L-glutamine(in) + Na(+)(out) = L-asparagine(in) + L-glutamine(out) + Na(+)(in). It catalyses the reaction L-glutamine(in) + L-alanine(out) + Na(+)(out) = L-glutamine(out) + L-alanine(in) + Na(+)(in). The catalysed reaction is L-valine(out) + L-glutamine(in) + Na(+)(out) = L-valine(in) + L-glutamine(out) + Na(+)(in). The enzyme catalyses L-glutamine(in) + L-methionine(out) + Na(+)(out) = L-glutamine(out) + L-methionine(in) + Na(+)(in). It carries out the reaction L-glutamine(in) + L-glutamate(out) + Na(+)(out) + H(+)(out) = L-glutamine(out) + L-glutamate(in) + Na(+)(in) + H(+)(in). It catalyses the reaction D-serine(in) + L-glutamine(out) + Na(+)(out) = D-serine(out) + L-glutamine(in) + Na(+)(in). The catalysed reaction is D-serine(in) + L-alanine(out) + Na(+)(out) = D-serine(out) + L-alanine(in) + Na(+)(in). The enzyme catalyses nitrate(in) = nitrate(out). It carries out the reaction iodide(out) = iodide(in). It catalyses the reaction thiocyanate(in) = thiocyanate(out). With respect to regulation, down-regulated at acidic pH, with the exception of L-glutamate transport which is up-regulated instead. Functionally, sodium-coupled antiporter of neutral amino acids. In a tri-substrate transport cycle, exchanges neutral amino acids between the extracellular and intracellular compartments, coupled to the inward cotransport of at least one sodium ion. The preferred substrate is the essential amino acid L-glutamine, a precursor for biosynthesis of proteins, nucleotides and amine sugars as well as an alternative fuel for mitochondrial oxidative phosphorylation. Exchanges L-glutamine with other neutral amino acids such as L-serine, L-threonine and L-asparagine in a bidirectional way. Provides L-glutamine to proliferating stem and activated cells driving the metabolic switch toward cell differentiation. The transport cycle is usually pH-independent, with the exception of L-glutamate. Transports extracellular L-glutamate coupled to the cotransport of one proton and one sodium ion in exchange for intracellular L-glutamine counter-ion. May provide for L-glutamate uptake in glial cells regulating glutamine/glutamate cycle in the nervous system. Can transport D-amino acids. Mediates D-serine release from the retinal glia potentially affecting NMDA receptor function in retinal neurons. Displays sodium- and amino acid-dependent but uncoupled channel-like anion conductance with a preference SCN(-) &gt;&gt; NO3(-) &gt; I(-) &gt; Cl(-). Through binding of the fusogenic protein syncytin-1/ERVW-1 may mediate trophoblasts syncytialization, the spontaneous fusion of their plasma membranes, an essential process in placental development. The sequence is that of Neutral amino acid transporter B(0) (Slc1a5) from Mus musculus (Mouse).